The primary structure comprises 353 residues: UPF0283 membrane protein YcjF (353 aa).

Positions 1–19 are enriched in basic and acidic residues; the sequence is MSEPLKPRIDFAEPLKEEP. The interval 1–35 is disordered; it reads MSEPLKPRIDFAEPLKEEPTSAFKAQQTFSEAESR. 3 consecutive transmembrane segments (helical) span residues 70–90, 100–120, and 213–233; these read MVMGGLALFGASVVGQGLQWT, VALGGCAAGALIIGAGVGSVV, and ESTLMIAVSPLALVDMAFIAW.

This sequence belongs to the UPF0283 family.

It is found in the cell inner membrane. This Salmonella choleraesuis (strain SC-B67) protein is UPF0283 membrane protein YcjF.